A 259-amino-acid polypeptide reads, in one-letter code: Protein GrpE (259 aa).

2 disordered regions span residues 1–75 (MNSD…KGSD) and 227–259 (GPGP…KDEN). Over residues 20–40 (NNPSENFVSSSNSNESVNQVE) the composition is skewed to low complexity. The segment covering 46-60 (EVEHQVKNDSVDTAK) has biased composition (basic and acidic residues). Positions 61 to 73 (EQSSTSCESNIKG) are enriched in polar residues.

It belongs to the GrpE family. In terms of assembly, homodimer.

It is found in the cytoplasm. Functionally, participates actively in the response to hyperosmotic and heat shock by preventing the aggregation of stress-denatured proteins, in association with DnaK and GrpE. It is the nucleotide exchange factor for DnaK and may function as a thermosensor. Unfolded proteins bind initially to DnaJ; upon interaction with the DnaJ-bound protein, DnaK hydrolyzes its bound ATP, resulting in the formation of a stable complex. GrpE releases ADP from DnaK; ATP binding to DnaK triggers the release of the substrate protein, thus completing the reaction cycle. Several rounds of ATP-dependent interactions between DnaJ, DnaK and GrpE are required for fully efficient folding. The protein is Protein GrpE of Prochlorococcus marinus (strain NATL1A).